The following is a 247-amino-acid chain: ATP synthase subunit a (247 aa).

Transmembrane regions (helical) follow at residues 26–46 (ITNN…LFYV), 85–105 (YFPL…IGLL), 115–135 (IIFT…INFF), 141–161 (FFNL…LVVI), 178–198 (FANM…IFNV), and 205–225 (ISFL…CIAI).

The protein belongs to the ATPase A chain family. In terms of assembly, F-type ATPases have 2 components, CF(1) - the catalytic core - and CF(0) - the membrane proton channel. CF(1) has five subunits: alpha(3), beta(3), gamma(1), delta(1), epsilon(1). CF(0) has three main subunits: a, b and c.

Its subcellular location is the mitochondrion inner membrane. Mitochondrial membrane ATP synthase (F(1)F(0) ATP synthase or Complex V) produces ATP from ADP in the presence of a proton gradient across the membrane which is generated by electron transport complexes of the respiratory chain. F-type ATPases consist of two structural domains, F(1) - containing the extramembraneous catalytic core and F(0) - containing the membrane proton channel, linked together by a central stalk and a peripheral stalk. During catalysis, ATP synthesis in the catalytic domain of F(1) is coupled via a rotary mechanism of the central stalk subunits to proton translocation. Key component of the proton channel; it may play a direct role in the translocation of protons across the membrane. The sequence is that of ATP synthase subunit a (ATP6) from Acanthamoeba castellanii (Amoeba).